The following is a 470-amino-acid chain: MGIMELFSPIAIAVLGSCVLFLFSRLKNLLGPPCIQGWIPWIGAGLEFGKAPLEFIEKARIKYGPVFTIFAMGNRMTFVSEEEGINVLLKSEHVDFESAVQSPVYHTAWIPKNVFSALHERLYALMKGKMGTFNTHHFTGPLTEELHEQLEGLGTHGTMDLNDFVRYLLYPATLNTLFKKGLFLTDKRTIKEFYQQFKTYDEGFEYGSQLPEWLLRNWSKSKRWLLALFEKNIGNIKAHGSAGHSGTLLQAILEVVETETRQYSPNYGLVVLWAALANAPPIAFWTLGYILSHPDIHRTVLESISSVFGTAGKDKIKVSEDDLKKLLIIKWCILESVRLRAPGVITRKVVKPVKILNHTVPSGDLLMLSPFWLHRNPKYFPEPESFKPERWKEANLDKYIFLDYFMAFGGGKFQCPGRWFALLEIQLCIILVLYKYECSLLDPLPKQSSRHLVGVPQPAGKCRIEYKQRA.

The next 2 helical transmembrane spans lie at 3–23 and 270–290; these read IMEL…LFLF and VVLW…LGYI. Position 415 (C415) interacts with heme.

This sequence belongs to the cytochrome P450 family. Requires heme as cofactor. As to expression, liver specific. Hepatic expression is sexually dimorphic (female &gt; male).

The protein localises to the endoplasmic reticulum membrane. It localises to the microsome membrane. The enzyme catalyses (24S)-hydroxycholesterol + reduced [NADPH--hemoprotein reductase] + O2 = (24S)-7alpha-dihydroxycholesterol + oxidized [NADPH--hemoprotein reductase] + H2O + H(+). Its pathway is steroid metabolism; cholesterol degradation. The protein operates within lipid metabolism; bile acid biosynthesis. In terms of biological role, a cytochrome P450 monooxygenase involved in neural cholesterol clearance through bile acid synthesis. Catalyzes 7-alpha hydroxylation of (24S)-hydroxycholesterol, a neural oxysterol that is metabolized to bile acids in the liver. Mechanistically, uses molecular oxygen inserting one oxygen atom into a substrate, and reducing the second into a water molecule, with two electrons provided by NADPH via cytochrome P450 reductase (CPR; NADPH-ferrihemoprotein reductase). This chain is 24-hydroxycholesterol 7-alpha-hydroxylase (Cyp39a1), found in Mus musculus (Mouse).